Reading from the N-terminus, the 800-residue chain is DNA topoisomerase 4 subunit A (800 aa).

The region spanning Leu31–Glu495 is the Topo IIA-type catalytic domain. The active-site O-(5'-phospho-DNA)-tyrosine intermediate is Tyr119.

The protein belongs to the type II topoisomerase GyrA/ParC subunit family. ParC type 2 subfamily. Heterotetramer composed of ParC and ParE.

It is found in the cell membrane. The enzyme catalyses ATP-dependent breakage, passage and rejoining of double-stranded DNA.. Functionally, topoisomerase IV is essential for chromosome segregation. It relaxes supercoiled DNA. Performs the decatenation events required during the replication of a circular DNA molecule. This chain is DNA topoisomerase 4 subunit A, found in Staphylococcus aureus (strain Mu50 / ATCC 700699).